The chain runs to 320 residues: Aspartate carbamoyltransferase catalytic subunit (320 aa).

Residues Arg-58 and Thr-59 each contribute to the carbamoyl phosphate site. Lys-86 serves as a coordination point for L-aspartate. Arg-108, His-136, and Gln-139 together coordinate carbamoyl phosphate. Arg-169 and Arg-223 together coordinate L-aspartate. Carbamoyl phosphate is bound by residues Gly-264 and Pro-265.

Belongs to the aspartate/ornithine carbamoyltransferase superfamily. ATCase family. In terms of assembly, heterododecamer (2C3:3R2) of six catalytic PyrB chains organized as two trimers (C3), and six regulatory PyrI chains organized as three dimers (R2).

It catalyses the reaction carbamoyl phosphate + L-aspartate = N-carbamoyl-L-aspartate + phosphate + H(+). It functions in the pathway pyrimidine metabolism; UMP biosynthesis via de novo pathway; (S)-dihydroorotate from bicarbonate: step 2/3. Catalyzes the condensation of carbamoyl phosphate and aspartate to form carbamoyl aspartate and inorganic phosphate, the committed step in the de novo pyrimidine nucleotide biosynthesis pathway. This Cereibacter sphaeroides (strain ATCC 17029 / ATH 2.4.9) (Rhodobacter sphaeroides) protein is Aspartate carbamoyltransferase catalytic subunit.